A 389-amino-acid chain; its full sequence is MLRPPMTKLVISNRESHRECEQVLQIGECAIVRSSSGEPWQLLNNGNSDSIDYALLQDILYEGYRLSTIYNIKSHTKSMKRLRRKLASIFSNSNFLLPLSKDGSSSSSQPHFYLSPSNSSLFDARKSSRSRGAVIKSPSTINIEKNRHSSNSGENQKMRLNLSMSTGNLCRAGVVRTPYPTSKQLHFDNDDGDEEDDTDDEGEADLVSIKTRSGRRNVLKSPPPPERIPSSMGASDAEEIDIKSHMKPLSVKIPANIFKTPTLDIPVDDDAEIDADVFPLPPPTPVNLKHGLFSIPSGRNSESARSRQTKRSPFGSVTSRTSSLDRRMSLSCLEDTSNYQKTQYLVFPLRTSSKKPYLLKFPEDMQEEDEKHNGSVWGSDTSLEEEIKV.

Disordered stretches follow at residues 119-156 (SSLFDARKSSRSRGAVIKSPSTINIEKNRHSSNSGENQ), 180-233 (PTSK…SSMG), 294-321 (SIPSGRNSESARSRQTKRSPFGSVTSRT), and 362-389 (PEDMQEEDEKHNGSVWGSDTSLEEEIKV). Positions 137-155 (SPSTINIEKNRHSSNSGEN) are enriched in polar residues. Residues 190-204 (DDGDEEDDTDDEGEA) are compositionally biased toward acidic residues.

This is an uncharacterized protein from Caenorhabditis elegans.